Consider the following 413-residue polypeptide: RING-H2 finger protein ATL54 (413 aa).

A helical membrane pass occupies residues 83–103; the sequence is ISIITITGAVLAILLTGFFLV. The segment at 177-219 adopts an RING-type; atypical zinc-finger fold; that stretch reads CPVCLNEFEEDESLRLLPKCNHAFHISCIDTWLSSHTNCPLCR. 2 disordered regions span residues 238 to 258 and 321 to 413; these read VTPG…EDHG and THVE…VFPL. A compositionally biased stretch (low complexity) spans 387 to 401; it reads SSSTLKTNGSSSSVS. Residues 402-413 show a composition bias toward polar residues; the sequence is CFNKNKSSVFPL.

Belongs to the RING-type zinc finger family. ATL subfamily.

Its subcellular location is the membrane. It catalyses the reaction S-ubiquitinyl-[E2 ubiquitin-conjugating enzyme]-L-cysteine + [acceptor protein]-L-lysine = [E2 ubiquitin-conjugating enzyme]-L-cysteine + N(6)-ubiquitinyl-[acceptor protein]-L-lysine.. Its pathway is protein modification; protein ubiquitination. The polypeptide is RING-H2 finger protein ATL54 (ATL54) (Arabidopsis thaliana (Mouse-ear cress)).